We begin with the raw amino-acid sequence, 134 residues long: Fluoride-specific ion channel FluC (134 aa).

Transmembrane regions (helical) follow at residues 7-27, 38-58, 69-89, and 110-130; these read LAVAIGGSLGAMSRYLVTIMA, GTLLVNTLGSFLAGFFLIVLV, LFLFTGFLGAFTTFSSFAAES, and VGSLSMVFIGTLVAKYVLLGH. Glycine 77 and threonine 80 together coordinate Na(+).

It belongs to the fluoride channel Fluc/FEX (TC 1.A.43) family.

Its subcellular location is the cell inner membrane. The catalysed reaction is fluoride(in) = fluoride(out). With respect to regulation, na(+) is not transported, but it plays an essential structural role and its presence is essential for fluoride channel function. Fluoride-specific ion channel. Important for reducing fluoride concentration in the cell, thus reducing its toxicity. This Legionella pneumophila subsp. pneumophila (strain Philadelphia 1 / ATCC 33152 / DSM 7513) protein is Fluoride-specific ion channel FluC.